A 68-amino-acid polypeptide reads, in one-letter code: Conotoxin tx3b (68 aa).

The N-terminal stretch at 1 to 19 (MSKLGALLTICLLLFSLTA) is a signal peptide. Positions 20–52 (VPLDGDQHADQPAQRLQDRIPTEDHPLFDPNKR) are excised as a propeptide. Intrachain disulfides connect C53-C67, C54-C63, and C59-C66. M61 is subject to Methionine sulfoxide; partial. C67 is modified (cysteine amide).

In terms of tissue distribution, expressed by the venom duct.

The protein localises to the secreted. Intracranial injection into mice causes scratching, hyperactivity and circular motion. This Conus textile (Cloth-of-gold cone) protein is Conotoxin tx3b.